The primary structure comprises 142 residues: Large ribosomal subunit protein uL13 (142 aa).

Belongs to the universal ribosomal protein uL13 family. Part of the 50S ribosomal subunit.

In terms of biological role, this protein is one of the early assembly proteins of the 50S ribosomal subunit, although it is not seen to bind rRNA by itself. It is important during the early stages of 50S assembly. This chain is Large ribosomal subunit protein uL13, found in Pyrococcus horikoshii (strain ATCC 700860 / DSM 12428 / JCM 9974 / NBRC 100139 / OT-3).